Here is a 138-residue protein sequence, read N- to C-terminus: Cysteine desulfuration protein SufE (138 aa).

Cysteine 51 acts as the Cysteine persulfide intermediate in catalysis.

This sequence belongs to the SufE family. As to quaternary structure, homodimer. Interacts with SufS.

It is found in the cytoplasm. Its pathway is cofactor biosynthesis; iron-sulfur cluster biosynthesis. In terms of biological role, participates in cysteine desulfuration mediated by SufS. Cysteine desulfuration mobilizes sulfur from L-cysteine to yield L-alanine and constitutes an essential step in sulfur metabolism for biosynthesis of a variety of sulfur-containing biomolecules. Functions as a sulfur acceptor for SufS, by mediating the direct transfer of the sulfur atom from the S-sulfanylcysteine of SufS, an intermediate product of cysteine desulfuration process. The polypeptide is Cysteine desulfuration protein SufE (Escherichia fergusonii (strain ATCC 35469 / DSM 13698 / CCUG 18766 / IAM 14443 / JCM 21226 / LMG 7866 / NBRC 102419 / NCTC 12128 / CDC 0568-73)).